Here is a 554-residue protein sequence, read N- to C-terminus: MTTHHRVRSSSNSSSNNINNNNNNNNNNNIHQLSSSRTMIDHHNSDPTSSSSPTNESQIHHFSNSNYNYNYDDVDDSTINSNSTNNNNKNRNIQNNNNQNISNNRDNNNNNINSNLNNQTNLINYNDDEDYDEDYEREIEDDEEYEEIGDEESSSGIGGDSEFNDSLNGSKAGSRNREIWINPNIELMLKIALSTTKNPYYYHNIAKKLEEMVGRPISEKLVRSQMTNLLGKNSKFFKHPYREIKSKPGIPKSLINSHNLREKQIWESCKNLITEIKSSPNYYSIGGGSFPTNNNNHNNASGASSSTSTPSTSSASSPASSSSSLSSLSNNNNNNNNNNNNNNNSNSINNSNNAHSIYPNGSNSGNSKNSSSSSSSSSSNNGNCSSNYPSPPLSENHLSLSLPSISKSHSNNTGSFGFSLSSPTTSSSNNSSNNNNNNNNSNQFFSSISDQQPSKKLHVVSPPLQSLQSIQPPISQLNNNNNNHHNNHHQNHHHQNHNHQHHSKKRKIRSYDSKHLEKFQVIREKVIETLSEIDDIINSMKNDSDNDNSEFEDC.

Disordered stretches follow at residues 1–127, 139–173, 293–395, and 416–509; these read MTTH…NYND, IEDD…SKAG, NNNN…PLSE, and FGFS…RKIR. Composition is skewed to low complexity over residues 9-30, 46-55, and 63-125; these read SSSN…NNNI, DPTSSSSPTN, and SNSN…LINY. Residues 139–153 are compositionally biased toward acidic residues; that stretch reads IEDDEEYEEIGDEES. Residues 164–173 are compositionally biased toward polar residues; that stretch reads NDSLNGSKAG. Composition is skewed to low complexity over residues 293–387, 416–449, and 461–484; these read NNNN…CSSN, FGFS…SSIS, and SPPL…NNNH. Positions 485–508 are enriched in basic residues; that stretch reads HNNHHQNHHHQNHNHQHHSKKRKI.

This is an uncharacterized protein from Dictyostelium discoideum (Social amoeba).